The following is a 201-amino-acid chain: UPF0301 protein Rleg2_0617 (201 aa).

It belongs to the UPF0301 (AlgH) family.

The polypeptide is UPF0301 protein Rleg2_0617 (Rhizobium leguminosarum bv. trifolii (strain WSM2304)).